A 145-amino-acid chain; its full sequence is D-aminoacyl-tRNA deacylase (145 aa).

The Gly-cisPro motif, important for rejection of L-amino acids motif lies at 137 to 138; sequence GP.

It belongs to the DTD family. In terms of assembly, homodimer.

The protein localises to the cytoplasm. It catalyses the reaction glycyl-tRNA(Ala) + H2O = tRNA(Ala) + glycine + H(+). The catalysed reaction is a D-aminoacyl-tRNA + H2O = a tRNA + a D-alpha-amino acid + H(+). An aminoacyl-tRNA editing enzyme that deacylates mischarged D-aminoacyl-tRNAs. Also deacylates mischarged glycyl-tRNA(Ala), protecting cells against glycine mischarging by AlaRS. Acts via tRNA-based rather than protein-based catalysis; rejects L-amino acids rather than detecting D-amino acids in the active site. By recycling D-aminoacyl-tRNA to D-amino acids and free tRNA molecules, this enzyme counteracts the toxicity associated with the formation of D-aminoacyl-tRNA entities in vivo and helps enforce protein L-homochirality. The chain is D-aminoacyl-tRNA deacylase from Enterobacter sp. (strain 638).